Reading from the N-terminus, the 187-residue chain is Lipoprotein signal peptidase (187 aa).

3 consecutive transmembrane segments (helical) span residues 12–32 (VAVFACIAIAAIAIDQLTKMW), 68–88 (MTWLISLLAMAACVALVVLAV), and 91–111 (ISMKWTVLFAFAFAGAFGNLI). Residues Asp127 and Asp140 contribute to the active site. Residues 141-161 (IFLMLAGVAAVLLLFLGEPFS) form a helical membrane-spanning segment. The disordered stretch occupies residues 167–187 (EANGKTLGDDANATDDGAKAA).

Belongs to the peptidase A8 family.

It is found in the cell membrane. The catalysed reaction is Release of signal peptides from bacterial membrane prolipoproteins. Hydrolyzes -Xaa-Yaa-Zaa-|-(S,diacylglyceryl)Cys-, in which Xaa is hydrophobic (preferably Leu), and Yaa (Ala or Ser) and Zaa (Gly or Ala) have small, neutral side chains.. The protein operates within protein modification; lipoprotein biosynthesis (signal peptide cleavage). This protein specifically catalyzes the removal of signal peptides from prolipoproteins. This Bifidobacterium adolescentis (strain ATCC 15703 / DSM 20083 / NCTC 11814 / E194a) protein is Lipoprotein signal peptidase.